A 239-amino-acid chain; its full sequence is 1-(5-phosphoribosyl)-5-[(5-phosphoribosylamino)methylideneamino] imidazole-4-carboxamide isomerase (239 aa).

Residue Asp-9 is the Proton acceptor of the active site. Residue Asp-131 is the Proton donor of the active site.

Belongs to the HisA/HisF family.

Its subcellular location is the cytoplasm. It catalyses the reaction 1-(5-phospho-beta-D-ribosyl)-5-[(5-phospho-beta-D-ribosylamino)methylideneamino]imidazole-4-carboxamide = 5-[(5-phospho-1-deoxy-D-ribulos-1-ylimino)methylamino]-1-(5-phospho-beta-D-ribosyl)imidazole-4-carboxamide. Its pathway is amino-acid biosynthesis; L-histidine biosynthesis; L-histidine from 5-phospho-alpha-D-ribose 1-diphosphate: step 4/9. The sequence is that of 1-(5-phosphoribosyl)-5-[(5-phosphoribosylamino)methylideneamino] imidazole-4-carboxamide isomerase from Bacteroides fragilis (strain YCH46).